The chain runs to 269 residues: Protein MGF 110-1L (269 aa).

Position 1 (Met-1) is a topological domain, cytoplasmic. One copy of the A repeat lies at 1–145; it reads MLGLQIFTLL…YVRKRSLQTV (145 aa). Residues 2–18 form a helical membrane-spanning segment; that stretch reads LGLQIFTLLSIPTLLYT. The Extracellular portion of the chain corresponds to 19–116; the sequence is YELELLDLTR…HEWHEAVIRK (98 aa). Residue Asn-75 is glycosylated (N-linked (GlcNAc...) asparagine; by host). Residues 117–137 form a helical membrane-spanning segment; the sequence is WQKLLTYGFYLVGCVLVANYV. The Cytoplasmic portion of the chain corresponds to 138 to 144; sequence RKRSLQT. The helical transmembrane segment at 145–165 threads the bilayer; the sequence is VMYLLVLLVIFFLLSQLMLYR. The stretch at 147–269 is one B repeat; sequence YLLVLLVIFF…DNLMKKQDMM (123 aa). Over 166–269 the chain is Extracellular; the sequence is ELEDKKHKIG…DNLMKKQDMM (104 aa).

This sequence belongs to the asfivirus MGF 110 family.

It localises to the host membrane. Functionally, plays a role in virus cell tropism, and may be required for efficient virus replication in macrophages. This is Protein MGF 110-1L from African swine fever virus (isolate Tick/South Africa/Pretoriuskop Pr4/1996) (ASFV).